The sequence spans 104 residues: A-type ATP synthase subunit F (104 aa).

It belongs to the V-ATPase F subunit family. Has multiple subunits with at least A(3), B(3), C, D, E, F, H, I and proteolipid K(x).

Its subcellular location is the cell membrane. In terms of biological role, component of the A-type ATP synthase that produces ATP from ADP in the presence of a proton gradient across the membrane. This is A-type ATP synthase subunit F from Thermoplasma volcanium (strain ATCC 51530 / DSM 4299 / JCM 9571 / NBRC 15438 / GSS1).